Consider the following 54-residue polypeptide: Large ribosomal subunit protein bL33 (54 aa).

It belongs to the bacterial ribosomal protein bL33 family.

The protein is Large ribosomal subunit protein bL33 of Chloroflexus aurantiacus (strain ATCC 29366 / DSM 635 / J-10-fl).